The chain runs to 250 residues: Pyrroloquinoline-quinone synthase (250 aa).

This sequence belongs to the PqqC family.

It catalyses the reaction 6-(2-amino-2-carboxyethyl)-7,8-dioxo-1,2,3,4,7,8-hexahydroquinoline-2,4-dicarboxylate + 3 O2 = pyrroloquinoline quinone + 2 H2O2 + 2 H2O + H(+). Its pathway is cofactor biosynthesis; pyrroloquinoline quinone biosynthesis. Its function is as follows. Ring cyclization and eight-electron oxidation of 3a-(2-amino-2-carboxyethyl)-4,5-dioxo-4,5,6,7,8,9-hexahydroquinoline-7,9-dicarboxylic-acid to PQQ. This Xanthomonas campestris pv. campestris (strain B100) protein is Pyrroloquinoline-quinone synthase.